We begin with the raw amino-acid sequence, 398 residues long: Enolase (398 aa).

Residue Q154 participates in (2R)-2-phosphoglycerate binding. Residue E196 is the Proton donor of the active site. The Mg(2+) site is built by D232, E273, and D300. The (2R)-2-phosphoglycerate site is built by K325, R354, S355, and K376. K325 (proton acceptor) is an active-site residue.

Belongs to the enolase family. Mg(2+) serves as cofactor.

Its subcellular location is the cytoplasm. It is found in the secreted. The protein localises to the cell surface. The enzyme catalyses (2R)-2-phosphoglycerate = phosphoenolpyruvate + H2O. It functions in the pathway carbohydrate degradation; glycolysis; pyruvate from D-glyceraldehyde 3-phosphate: step 4/5. Its function is as follows. Catalyzes the reversible conversion of 2-phosphoglycerate (2-PG) into phosphoenolpyruvate (PEP). It is essential for the degradation of carbohydrates via glycolysis. The polypeptide is Enolase (Halobacterium salinarum (strain ATCC 700922 / JCM 11081 / NRC-1) (Halobacterium halobium)).